Reading from the N-terminus, the 100-residue chain is NADH-quinone oxidoreductase subunit K (100 aa).

The next 3 membrane-spanning stretches (helical) occupy residues 4-24 (VTWY…GVLL), 29-49 (LIVM…FLAF), and 61-81 (IAFF…AVVI).

It belongs to the complex I subunit 4L family. NDH-1 is composed of 14 different subunits. Subunits NuoA, H, J, K, L, M, N constitute the membrane sector of the complex.

It localises to the cell inner membrane. It catalyses the reaction a quinone + NADH + 5 H(+)(in) = a quinol + NAD(+) + 4 H(+)(out). Functionally, NDH-1 shuttles electrons from NADH, via FMN and iron-sulfur (Fe-S) centers, to quinones in the respiratory chain. The immediate electron acceptor for the enzyme in this species is believed to be ubiquinone. Couples the redox reaction to proton translocation (for every two electrons transferred, four hydrogen ions are translocated across the cytoplasmic membrane), and thus conserves the redox energy in a proton gradient. This Anaeromyxobacter sp. (strain Fw109-5) protein is NADH-quinone oxidoreductase subunit K.